We begin with the raw amino-acid sequence, 176 residues long: NAD(P)H-quinone oxidoreductase subunit J (176 aa).

A disordered region spans residues M1 to Q32. Residues I20–Q32 show a composition bias toward polar residues.

It belongs to the complex I 30 kDa subunit family. In terms of assembly, NDH-1 can be composed of about 15 different subunits; different subcomplexes with different compositions have been identified which probably have different functions.

Its subcellular location is the cellular thylakoid membrane. It carries out the reaction a plastoquinone + NADH + (n+1) H(+)(in) = a plastoquinol + NAD(+) + n H(+)(out). It catalyses the reaction a plastoquinone + NADPH + (n+1) H(+)(in) = a plastoquinol + NADP(+) + n H(+)(out). Its function is as follows. NDH-1 shuttles electrons from an unknown electron donor, via FMN and iron-sulfur (Fe-S) centers, to quinones in the respiratory and/or the photosynthetic chain. The immediate electron acceptor for the enzyme in this species is believed to be plastoquinone. Couples the redox reaction to proton translocation, and thus conserves the redox energy in a proton gradient. Cyanobacterial NDH-1 also plays a role in inorganic carbon-concentration. The protein is NAD(P)H-quinone oxidoreductase subunit J of Prochlorococcus marinus (strain MIT 9215).